Here is a 189-residue protein sequence, read N- to C-terminus: ATP synthase subunit b (189 aa).

A helical transmembrane segment spans residues 25 to 45 (LPVWPEVVIGLICFGIVFFVF).

It belongs to the ATPase B chain family. As to quaternary structure, F-type ATPases have 2 components, F(1) - the catalytic core - and F(0) - the membrane proton channel. F(1) has five subunits: alpha(3), beta(3), gamma(1), delta(1), epsilon(1). F(0) has three main subunits: a(1), b(2) and c(10-14). The alpha and beta chains form an alternating ring which encloses part of the gamma chain. F(1) is attached to F(0) by a central stalk formed by the gamma and epsilon chains, while a peripheral stalk is formed by the delta and b chains.

The protein localises to the cell membrane. F(1)F(0) ATP synthase produces ATP from ADP in the presence of a proton or sodium gradient. F-type ATPases consist of two structural domains, F(1) containing the extramembraneous catalytic core and F(0) containing the membrane proton channel, linked together by a central stalk and a peripheral stalk. During catalysis, ATP synthesis in the catalytic domain of F(1) is coupled via a rotary mechanism of the central stalk subunits to proton translocation. Its function is as follows. Component of the F(0) channel, it forms part of the peripheral stalk, linking F(1) to F(0). The sequence is that of ATP synthase subunit b from Streptomyces griseus subsp. griseus (strain JCM 4626 / CBS 651.72 / NBRC 13350 / KCC S-0626 / ISP 5235).